Consider the following 375-residue polypeptide: ATP phosphoribosyltransferase regulatory subunit (375 aa).

This sequence belongs to the class-II aminoacyl-tRNA synthetase family. HisZ subfamily. In terms of assembly, heteromultimer composed of HisG and HisZ subunits.

The protein resides in the cytoplasm. The protein operates within amino-acid biosynthesis; L-histidine biosynthesis; L-histidine from 5-phospho-alpha-D-ribose 1-diphosphate: step 1/9. Functionally, required for the first step of histidine biosynthesis. May allow the feedback regulation of ATP phosphoribosyltransferase activity by histidine. This Agrobacterium fabrum (strain C58 / ATCC 33970) (Agrobacterium tumefaciens (strain C58)) protein is ATP phosphoribosyltransferase regulatory subunit.